Reading from the N-terminus, the 214-residue chain is MKLLILTCLVAVALARPKHPIKHQGLSSEVLNENLLRFVVAPFPEVFRKENINELSKDIGSESIEDQAMEDAKQMKAGSSSSSEEIVPNSAEQKYIQKEDVPSERYLGYLEQLLRLKKYNVPQLEIVPKSAEEQLHSMKEGNPAHQKQPMIAVNQELAYFYPQLFRQFYQLDAYPSGAWYYLPLGTQYTDAPSFSDIPNPIGSENSGKITMPLW.

A signal peptide spans 1 to 15 (MKLLILTCLVAVALA). Serine 27 is modified (phosphoserine; in allele A). Position 56 is a phosphoserine; in allele C (serine 56). Serine 61 and serine 63 each carry phosphoserine. A disordered region spans residues 69-91 (MEDAKQMKAGSSSSSEEIVPNSA). The residue at position 79 (serine 79) is a Phosphoserine; in alleles A and C. Residue serine 80 is modified to Phosphoserine. A Phosphoserine; in alleles A and C modification is found at serine 81. Serine 82 bears the Phosphoserine mark. Serine 83 bears the Phosphoserine; in alleles A and C mark. Serine 90 is subject to Phosphoserine. An opioid-like peptide sequence region spans residues 105 to 111 (RYLGYLE). Serine 130 bears the Phosphoserine mark.

The protein belongs to the alpha-casein family. Mammary gland specific. Secreted in milk.

The protein resides in the secreted. Important role in the capacity of milk to transport calcium phosphate. The polypeptide is Alpha-S1-casein (CSN1S1) (Ovis aries (Sheep)).